A 164-amino-acid chain; its full sequence is ATP synthase subunit b (164 aa).

The helical transmembrane segment at 6 to 26 threads the bilayer; it reads GELVGNFILVTGSVIVLLLLI.

The protein belongs to the ATPase B chain family. In terms of assembly, F-type ATPases have 2 components, F(1) - the catalytic core - and F(0) - the membrane proton channel. F(1) has five subunits: alpha(3), beta(3), gamma(1), delta(1), epsilon(1). F(0) has three main subunits: a(1), b(2) and c(10-14). The alpha and beta chains form an alternating ring which encloses part of the gamma chain. F(1) is attached to F(0) by a central stalk formed by the gamma and epsilon chains, while a peripheral stalk is formed by the delta and b chains.

The protein resides in the cell membrane. Its function is as follows. F(1)F(0) ATP synthase produces ATP from ADP in the presence of a proton or sodium gradient. F-type ATPases consist of two structural domains, F(1) containing the extramembraneous catalytic core and F(0) containing the membrane proton channel, linked together by a central stalk and a peripheral stalk. During catalysis, ATP synthesis in the catalytic domain of F(1) is coupled via a rotary mechanism of the central stalk subunits to proton translocation. Component of the F(0) channel, it forms part of the peripheral stalk, linking F(1) to F(0). This Streptococcus pyogenes serotype M6 (strain ATCC BAA-946 / MGAS10394) protein is ATP synthase subunit b.